The primary structure comprises 362 residues: S-adenosylmethionine-dependent nucleotide dehydratase RSAD2 (362 aa).

The interval 47–73 (EQPQVRGEPEDTQETQEDGNSTQPTTP) is disordered. Residues 64–73 (DGNSTQPTTP) show a composition bias toward polar residues. Residues 70–290 (PTTPVSVNYH…LERHKEVSCL (221 aa)) enclose the Radical SAM core domain. [4Fe-4S] cluster is bound by residues C84, C88, and C91. An N6-acetyllysine modification is found at K198. K207 is covalently cross-linked (Glycyl lysine isopeptide (Lys-Gly) (interchain with G-Cter in ubiquitin)).

The protein belongs to the radical SAM superfamily. RSAD2 family. In terms of assembly, homodimer. Interacts with IRAK1 and TRAF6. Interacts with FPPS. Interacts with HADHB. Interacts (via C-terminus) with VAPA/VAP33 (via C-terminus). It depends on [4Fe-4S] cluster as a cofactor. In terms of processing, acetylated by HAT1. HAT1-mediated acetylation of Lys-198 in turn recruits UBE4A that stimulates RSAD2 polyubiquitination leading to proteasomal degradation. Post-translationally, 'Lys-6'-linked polyubiquitination at Lys-207 leads to RSAD2 protein degradation. In terms of tissue distribution, expressed at higher levels in atherosclerotic arteries than in normal arteries.

Its subcellular location is the endoplasmic reticulum membrane. It is found in the golgi apparatus. It localises to the endoplasmic reticulum. The protein localises to the lipid droplet. The protein resides in the mitochondrion. Its subcellular location is the mitochondrion inner membrane. It is found in the mitochondrion outer membrane. The catalysed reaction is CTP + AH2 + S-adenosyl-L-methionine = 3'-deoxy-3',4'-didehydro-CTP + 5'-deoxyadenosine + L-methionine + A + H2O + H(+). IRAK1 and TRAF6 synergistically activate RSAD2 increasing its activity with CTP as substrate about 10-fold. In terms of biological role, interferon-inducible antiviral protein which plays a major role in the cell antiviral state induced by type I and type II interferon. Catalyzes the conversion of cytidine triphosphate (CTP) to 3'-deoxy-3',4'-didehydro-CTP (ddhCTP) via a SAM-dependent radical mechanism. In turn, ddhCTP acts as a chain terminator for the RNA-dependent RNA polymerases from multiple viruses and directly inhibits viral replication. Therefore, inhibits a wide range of DNA and RNA viruses. Also promotes TLR7 and TLR9-dependent production of IFN-beta production in plasmacytoid dendritic cells (pDCs) by facilitating 'Lys-63'-linked ubiquitination of IRAK1 by TRAF6. Plays a role in CD4+ T-cells activation and differentiation. Facilitates T-cell receptor (TCR)-mediated GATA3 activation and optimal T-helper 2 (Th2) cytokine production by modulating NFKB1 and JUNB activities. Can inhibit secretion of soluble proteins. This is S-adenosylmethionine-dependent nucleotide dehydratase RSAD2 from Mus musculus (Mouse).